Reading from the N-terminus, the 134-residue chain is Arginine decarboxylase proenzyme (134 aa).

The active-site Schiff-base intermediate with substrate; via pyruvic acid is S82. The residue at position 82 (S82) is a Pyruvic acid (Ser); by autocatalysis. Residue H87 is the Proton acceptor; for processing activity of the active site. Residue C102 is the Proton donor; for catalytic activity of the active site.

This sequence belongs to the prokaryotic AdoMetDC family. Type 1 subfamily. As to quaternary structure, heterooctamer of four alpha and four beta chains arranged as a tetramer of alpha/beta heterodimers. The cofactor is pyruvate. In terms of processing, is synthesized initially as an inactive proenzyme. Formation of the active enzyme involves a self-maturation process in which the active site pyruvoyl group is generated from an internal serine residue via an autocatalytic post-translational modification. Two non-identical subunits are generated from the proenzyme in this reaction, and the pyruvate is formed at the N-terminus of the alpha chain, which is derived from the carboxyl end of the proenzyme. The post-translation cleavage follows an unusual pathway, termed non-hydrolytic serinolysis, in which the side chain hydroxyl group of the serine supplies its oxygen atom to form the C-terminus of the beta chain, while the remainder of the serine residue undergoes an oxidative deamination to produce ammonia and the pyruvoyl group blocking the N-terminus of the alpha chain.

The catalysed reaction is L-arginine + H(+) = agmatine + CO2. It functions in the pathway amine and polyamine biosynthesis; agmatine biosynthesis; agmatine from L-arginine: step 1/1. In terms of biological role, specifically catalyzes the decarboxylation of L-arginine to agmatine. Has no S-adenosylmethionine decarboxylase (AdoMetDC) activity. The polypeptide is Arginine decarboxylase proenzyme (Caldivirga maquilingensis (strain ATCC 700844 / DSM 13496 / JCM 10307 / IC-167)).